A 125-amino-acid polypeptide reads, in one-letter code: Fluoride-specific ion channel FluC (125 aa).

The next 2 helical transmembrane spans lie at 4-24 (LWVA…GVWI) and 34-54 (YGTF…LTVL). Na(+)-binding residues include Gly-74 and Thr-77. The chain crosses the membrane as a helical span at residues 99–119 (VLYFGSSLALGILAVWLGMVV).

It belongs to the fluoride channel Fluc/FEX (TC 1.A.43) family.

It is found in the cell inner membrane. It catalyses the reaction fluoride(in) = fluoride(out). Na(+) is not transported, but it plays an essential structural role and its presence is essential for fluoride channel function. Functionally, fluoride-specific ion channel. Important for reducing fluoride concentration in the cell, thus reducing its toxicity. The chain is Fluoride-specific ion channel FluC from Acidobacterium capsulatum (strain ATCC 51196 / DSM 11244 / BCRC 80197 / JCM 7670 / NBRC 15755 / NCIMB 13165 / 161).